The following is a 296-amino-acid chain: Ceramide synthase LOH2 (296 aa).

6 helical membrane-spanning segments follow: residues 19–39 (VWHF…RLVL), 80–100 (LLYY…EPWA), 121–141 (LYYM…LAWE), 158–178 (IILL…IILA), 206–226 (FALF…FWII), and 254–274 (MLLM…AMIV). The 208-residue stretch at 71 to 278 (VKCKESLWKL…ICAMIVRLLK (208 aa)) folds into the TLC domain. 2 positions are modified to phosphoserine: Ser-289 and Ser-291.

Expressed ubiquitously with highest levels in pollen.

It localises to the endoplasmic reticulum membrane. The enzyme catalyses a sphingoid base + hexadecanoyl-CoA = an N-hexadecanoyl-sphingoid base + CoA + H(+). It carries out the reaction sphinganine + hexadecanoyl-CoA = N-hexadecanoylsphinganine + CoA + H(+). It catalyses the reaction sphing-4-enine + hexadecanoyl-CoA = N-hexadecanoylsphing-4-enine + CoA + H(+). The catalysed reaction is sphinga-(4E,8E)-dienine + hexadecanoyl-CoA = N-hexadecanoylsphinga-(4E,8E)-dienine + CoA + H(+). The enzyme catalyses sphinga-(4E,8Z)-dienine + hexadecanoyl-CoA = N-hexadecanoylsphinga-(4E,8Z)-dienine + CoA + H(+). It participates in sphingolipid metabolism. Inhibited by the mycotoxin fumonisin B(1), a sphingosine analog mycotoxins produced by pathogenic fungi. Activated by divalent cation such as magnesium Mg(2+), zinc Zn(2+), manganese Mn(2+) and calcium Ca(2+). Prevents cell division in root meristems and promotes salicylic acid (SA) production and hypersensitive response (HR). Catalyzes the biosynthesis of ceramide sphingolipids with C(16) fatty acids, structural membrane lipids involved in membrane trafficking (e.g. early endosomes) and cell polarity (e.g. polar auxin transport related proteins); accepts only C16:0 fatty acids, but with a wide range of d18 sphingoid bases, such as sphinganine (d18:0) and palmitoyl-CoA. Mediates resistance to sphinganine-analog mycotoxins (SAMs, e.g. fumonisin B(1)) by restoring the sphingolipid biosynthesis. Could salvage the transport of GPI-anchored proteins from the endoplasmic reticulum to the Golgi apparatus in ceramides-depleted cells after SAM exposure. Contributes to hypoxic conditions tolerance (e.g. submergences), especially in the dark, by promoting the formation of very-long-chain (VLC) ceramide species (22:1, 24:1 and 26:1) and of VLC unsaturated ceramides, which are modulating CTR1-mediated ethylene signaling leading to endoplasmic reticulum (ER)-to-nucleus translocation of EIN2 and EIN3. In Arabidopsis thaliana (Mouse-ear cress), this protein is Ceramide synthase LOH2.